The following is a 235-amino-acid chain: 7-cyano-7-deazaguanine synthase (235 aa).

ATP is bound at residue Phe16–Leu26. Positions 193, 201, 204, and 207 each coordinate Zn(2+).

Belongs to the QueC family. The cofactor is Zn(2+).

It carries out the reaction 7-carboxy-7-deazaguanine + NH4(+) + ATP = 7-cyano-7-deazaguanine + ADP + phosphate + H2O + H(+). The protein operates within purine metabolism; 7-cyano-7-deazaguanine biosynthesis. In terms of biological role, catalyzes the ATP-dependent conversion of 7-carboxy-7-deazaguanine (CDG) to 7-cyano-7-deazaguanine (preQ(0)). The polypeptide is 7-cyano-7-deazaguanine synthase (Actinobacillus succinogenes (strain ATCC 55618 / DSM 22257 / CCUG 43843 / 130Z)).